We begin with the raw amino-acid sequence, 77 residues long: RNA-binding protein Hfq (77 aa).

The Sm domain occupies 9 to 69 (DQFLNQLRKE…ISTFAPQKNV (61 aa)).

Belongs to the Hfq family. Homohexamer.

RNA chaperone that binds small regulatory RNA (sRNAs) and mRNAs to facilitate mRNA translational regulation in response to envelope stress, environmental stress and changes in metabolite concentrations. Also binds with high specificity to tRNAs. The polypeptide is RNA-binding protein Hfq (Shouchella clausii (strain KSM-K16) (Alkalihalobacillus clausii)).